The sequence spans 67 residues: SPbeta prophage-derived uncharacterized protein YoqF (67 aa).

This is SPbeta prophage-derived uncharacterized protein YoqF (yoqF) from Bacillus subtilis (strain 168).